Reading from the N-terminus, the 176-residue chain is Large ribosomal subunit protein uL6 (176 aa).

The protein belongs to the universal ribosomal protein uL6 family. Part of the 50S ribosomal subunit.

Functionally, this protein binds to the 23S rRNA, and is important in its secondary structure. It is located near the subunit interface in the base of the L7/L12 stalk, and near the tRNA binding site of the peptidyltransferase center. In Methanothrix thermoacetophila (strain DSM 6194 / JCM 14653 / NBRC 101360 / PT) (Methanosaeta thermophila), this protein is Large ribosomal subunit protein uL6.